A 180-amino-acid polypeptide reads, in one-letter code: UPF0227 protein YcfP (180 aa).

Belongs to the UPF0227 family.

This Escherichia coli O9:H4 (strain HS) protein is UPF0227 protein YcfP.